A 72-amino-acid polypeptide reads, in one-letter code: MKLTCVLIVAVLFLTACQLTTAASYARSEREHPDLGSSDQNSKLTKRCLASGETCWRDTSCCSFSCTNNVCF.

The first 22 residues, Met1–Ala22, serve as a signal peptide directing secretion. The propeptide occupies Ala23–Thr45. A disordered region spans residues Tyr25–Leu44. 3 disulfides stabilise this stretch: Cys48/Cys62, Cys55/Cys66, and Cys61/Cys71.

The protein belongs to the conotoxin O1 superfamily. As to expression, expressed by the venom duct.

It localises to the secreted. The protein is Conotoxin VnMKLT2-021 of Conus ventricosus (Mediterranean cone).